The chain runs to 668 residues: Phosphoglycerate transport system sensor protein PgtB (668 aa).

The next 2 membrane-spanning stretches (helical) occupy residues 20–40 and 342–362; these read GAFL…LYSW and LILV…HYFI. The region spanning 364-416 is the HAMP domain; the sequence is SRLVKRFTALNQAVVQIGLGRTDSTIPVYGRDELGRIARLLRHTLGQLNMQRR. Residues 454-663 enclose the Histidine kinase domain; that stretch reads TLAHEINQPL…CVVLQFSVTD (210 aa). His457 bears the Phosphohistidine; by autocatalysis mark.

It is found in the cell inner membrane. The enzyme catalyses ATP + protein L-histidine = ADP + protein N-phospho-L-histidine.. Member of the two-component regulatory system PgtB/PgtA that regulates the inducible phosphoglycerate transport system. Activates PgtA by phosphorylation. The polypeptide is Phosphoglycerate transport system sensor protein PgtB (pgtB) (Salmonella typhimurium (strain LT2 / SGSC1412 / ATCC 700720)).